A 373-amino-acid chain; its full sequence is Histidine protein methyltransferase 1 homolog (373 aa).

Residues 30–42 are compositionally biased toward basic and acidic residues; that stretch reads SKESLVSERQKGT. Disordered stretches follow at residues 30–52 and 64–94; these read SKES…STEQ and KSER…HEEK. Residues 70–88 show a composition bias toward polar residues; it reads APSQDPDSSFGAANSSSNL. A phosphoserine mark is found at Ser-72 and Ser-77. A Tele-methylhistidine modification is found at His-154. Residues 168-172, Gly-195, and 216-218 each bind S-adenosyl-L-methionine; these read IWECT and QDY. The Nuclear localization signal signature appears at 247-253; that stretch reads PDVKRLR. S-adenosyl-L-methionine-binding positions include 269 to 271 and Ser-294; that span reads GEW.

Belongs to the methyltransferase superfamily. METTL18 family. Interacts with GRWD1 and members of the heat shock protein 90 and 70 families; these proteins may possibly be methylation substrates for the enzyme. Post-translationally, monomethylated at His-154 through automethylation. Automethylation at His-154 positively regulates the methyltransferase activity toward RPL3. Probably methylated on other residues.

Its subcellular location is the cytoplasm. It localises to the cytosol. It is found in the nucleus. The protein localises to the nucleolus. It carries out the reaction L-histidyl-[protein] + S-adenosyl-L-methionine = N(tele)-methyl-L-histidyl-[protein] + S-adenosyl-L-homocysteine + H(+). Protein-L-histidine N-tele-methyltransferase that specifically monomethylates RPL3, thereby regulating translation elongation. Histidine methylation of RPL3 regulates translation elongation by slowing ribosome traversal on tyrosine codons: slower elongation provides enough time for proper folding of synthesized proteins and prevents cellular aggregation of tyrosine-rich proteins. This chain is Histidine protein methyltransferase 1 homolog (METTL18), found in Bos taurus (Bovine).